We begin with the raw amino-acid sequence, 523 residues long: UDP-glucuronosyltransferase 3A1 (523 aa).

Positions 1 to 22 (MVGQRVLLLVAFLLSGVLLSEA) are cleaved as a signal peptide. Residues 23–483 (AKILTISTLG…YAFQQPWHEQ (461 aa)) lie on the Extracellular side of the membrane. The N-linked (GlcNAc...) asparagine glycan is linked to Asn52. The chain crosses the membrane as a helical span at residues 484 to 504 (YLIDVFVFLLGLTLGTMWLCG). The Cytoplasmic segment spans residues 505 to 523 (KLLGVVARWLRGARKVKKT).

It belongs to the UDP-glycosyltransferase family.

The protein resides in the membrane. The catalysed reaction is glucuronate acceptor + UDP-alpha-D-glucuronate = acceptor beta-D-glucuronoside + UDP + H(+). In terms of biological role, UDP-glucuronosyltransferases catalyze phase II biotransformation reactions in which lipophilic substrates are conjugated with glucuronic acid to increase water solubility and enhance excretion. They are of major importance in the conjugation and subsequent elimination of potentially toxic xenobiotics and endogenous compounds. In Homo sapiens (Human), this protein is UDP-glucuronosyltransferase 3A1 (UGT3A1).